A 222-amino-acid chain; its full sequence is Pyridoxine/pyridoxamine 5'-phosphate oxidase (222 aa).

Substrate is bound by residues 11 to 14 (RVEY) and K79. FMN is bound by residues 74 to 79 (RTVLCK), 89 to 90 (YT), K96, and Q118. Y136, R140, and S144 together coordinate substrate. FMN contacts are provided by residues 153-154 (QS) and W199. 205–207 (RVH) contributes to the substrate binding site. R209 serves as a coordination point for FMN.

This sequence belongs to the pyridoxamine 5'-phosphate oxidase family. In terms of assembly, homodimer. Requires FMN as cofactor.

The catalysed reaction is pyridoxamine 5'-phosphate + O2 + H2O = pyridoxal 5'-phosphate + H2O2 + NH4(+). The enzyme catalyses pyridoxine 5'-phosphate + O2 = pyridoxal 5'-phosphate + H2O2. It functions in the pathway cofactor metabolism; pyridoxal 5'-phosphate salvage; pyridoxal 5'-phosphate from pyridoxamine 5'-phosphate: step 1/1. It participates in cofactor metabolism; pyridoxal 5'-phosphate salvage; pyridoxal 5'-phosphate from pyridoxine 5'-phosphate: step 1/1. In terms of biological role, catalyzes the oxidation of either pyridoxine 5'-phosphate (PNP) or pyridoxamine 5'-phosphate (PMP) into pyridoxal 5'-phosphate (PLP). In Mycolicibacterium vanbaalenii (strain DSM 7251 / JCM 13017 / BCRC 16820 / KCTC 9966 / NRRL B-24157 / PYR-1) (Mycobacterium vanbaalenii), this protein is Pyridoxine/pyridoxamine 5'-phosphate oxidase.